A 125-amino-acid polypeptide reads, in one-letter code: Calcitonin receptor-stimulating peptide 1 (125 aa).

A signal peptide spans 1 to 25 (MGFWKFPPFLVLSILVLYQAGMFHA). Positions 26-77 (APFRSVFDGRFDPATLDEEESRLLLAAMVNDYEQMRARESEKAQKTEGSRIQ) are excised as a propeptide. Cys-81 and Cys-86 form a disulfide bridge.

It belongs to the calcitonin family.

The protein resides in the secreted. Functionally, stimulates cAMP production in porcine kidney cell line LLC-PK1 via the calcitonin receptor (CT) but not via the CT-like (CL) receptor. This is Calcitonin receptor-stimulating peptide 1 (CRSP1) from Capra hircus (Goat).